The following is a 206-amino-acid chain: Flavin reductase (NADPH) (206 aa).

Residues Gly-10, Thr-12, Gly-13, Asn-14, Thr-15, Arg-35, Ser-38, and Arg-39 each coordinate NADP(+). Ser-42 bears the Phosphoserine mark. NADP(+) is bound by residues Asp-54, Val-55, Leu-75, Gly-76, and Arg-78. A Phosphoserine modification is found at Ser-82. Residues Met-87, Cys-109, His-132, His-153, and Ile-154 each coordinate NADP(+). Catalysis depends on Cys-109, which acts as the S-nitroso-cysteine intermediate; for S-nitroso-CoA-dependent nitrosyltransferase activity. Residue Cys-188 is the S-nitroso-cysteine intermediate; for S-nitroso-CoA-dependent nitrosyltransferase activity of the active site.

Monomer. At least expressed in the liver and erythrocyte.

The protein localises to the cytoplasm. It catalyses the reaction reduced riboflavin + NADP(+) = riboflavin + NADPH + 2 H(+). The enzyme catalyses bilirubin IXbeta + NADP(+) = biliverdin IXbeta + NADPH + H(+). It carries out the reaction FMNH2 + NAD(+) = FMN + NADH + 2 H(+). The catalysed reaction is FMNH2 + NADP(+) = FMN + NADPH + 2 H(+). It catalyses the reaction S-nitroso-CoA + L-cysteinyl-[protein] = S-nitroso-L-cysteinyl-[protein] + CoA. The enzyme catalyses L-cysteinyl-[SCAN] + S-nitroso-CoA = S-nitroso-L-cysteinyl-[SCAN] + CoA. It carries out the reaction S-nitroso-L-cysteinyl-[SCAN] + L-cysteinyl-[protein] = L-cysteinyl-[SCAN] + S-nitroso-L-cysteinyl-[protein]. In terms of biological role, enzyme that can both act as a NAD(P)H-dependent reductase and a S-nitroso-CoA-dependent nitrosyltransferase. Promotes fetal heme degradation during development. Also expressed in adult tissues, where it acts as a regulator of hematopoiesis, intermediary metabolism (glutaminolysis, glycolysis, TCA cycle and pentose phosphate pathway) and insulin signaling. Has a broad specificity oxidoreductase activity by catalyzing the NAD(P)H-dependent reduction of a variety of flavins, such as riboflavin, FAD or FMN, biliverdins, methemoglobin and PQQ (pyrroloquinoline quinone). Contributes to fetal heme catabolism by catalyzing reduction of biliverdin IXbeta into bilirubin IXbeta in the liver. Biliverdin IXbeta, which constitutes the major heme catabolite in the fetus is not present in adult. Does not reduce bilirubin IXalpha. Can also reduce the complexed Fe(3+) iron to Fe(2+) in the presence of FMN and NADPH. Acts as a protein nitrosyltransferase by catalyzing nitrosylation of cysteine residues of target proteins, such as HMOX2, INSR and IRS1. S-nitroso-CoA-dependent nitrosyltransferase activity is mediated via a 'ping-pong' mechanism: BLVRB first associates with both S-nitroso-CoA and protein substrate, nitric oxide group is then transferred from S-nitroso-CoA to Cys-109 and Cys-188 residues of BLVRB and from S-nitroso-BLVRB to the protein substrate. Inhibits insulin signaling by mediating nitrosylation of INSR and IRS1, leading to their inhibition. This is Flavin reductase (NADPH) (BLVRB) from Bos taurus (Bovine).